Reading from the N-terminus, the 132-residue chain is Putative F-box protein At4g05620 (132 aa).

Positions 17–63 (QKKSLSLPHDVLVSCLAHVSRLHYSILSLVLKNFRSLIASPELYKTR) constitute an F-box domain.

The protein is Putative F-box protein At4g05620 of Arabidopsis thaliana (Mouse-ear cress).